The following is a 339-amino-acid chain: S-adenosylmethionine:tRNA ribosyltransferase-isomerase (339 aa).

It belongs to the QueA family. In terms of assembly, monomer.

It is found in the cytoplasm. The catalysed reaction is 7-aminomethyl-7-carbaguanosine(34) in tRNA + S-adenosyl-L-methionine = epoxyqueuosine(34) in tRNA + adenine + L-methionine + 2 H(+). Its pathway is tRNA modification; tRNA-queuosine biosynthesis. Functionally, transfers and isomerizes the ribose moiety from AdoMet to the 7-aminomethyl group of 7-deazaguanine (preQ1-tRNA) to give epoxyqueuosine (oQ-tRNA). In Campylobacter fetus subsp. fetus (strain 82-40), this protein is S-adenosylmethionine:tRNA ribosyltransferase-isomerase.